A 1186-amino-acid chain; its full sequence is Chromosome partition protein Smc (1186 aa).

An ATP-binding site is contributed by 32-39 (PNGSGKSN). Coiled-coil stretches lie at residues 167 to 206 (VLKY…EPLK) and 259 to 481 (SSAI…QAYQ). Residues 519 to 637 (GIRGAVLELI…EDLKGANELA (119 aa)) form the SMC hinge domain. Coiled-coil stretches lie at residues 672-864 (LLGR…MSSS), 893-943 (RDQR…NLLQ), and 990-1029 (SIDE…DEEM).

It belongs to the SMC family. Homodimer.

It localises to the cytoplasm. Its function is as follows. Required for chromosome condensation and partitioning. This Bacillus subtilis (strain 168) protein is Chromosome partition protein Smc.